A 485-amino-acid polypeptide reads, in one-letter code: Aldehyde dehydrogenase family 3 member A2 (485 aa).

Topologically, residues 1–463 are cytoplasmic; that stretch reads MEREVQRVRQ…FLLRRFNKEK (463 aa). 185–190 contributes to the NAD(+) binding site; that stretch reads GNTAVG. Catalysis depends on residues Glu-207 and Cys-241. Ser-293 is modified (phosphoserine). A helical transmembrane segment spans residues 464-484; sequence LGLLVLTFLGIVAAVLVNAGY. Residues 481–484 carry the Prevents secretion from ER motif; sequence NAGY.

Belongs to the aldehyde dehydrogenase family. Homodimer.

The protein resides in the microsome membrane. The protein localises to the endoplasmic reticulum membrane. It carries out the reaction an aldehyde + NAD(+) + H2O = a carboxylate + NADH + 2 H(+). It catalyses the reaction a fatty aldehyde + NAD(+) + H2O = a fatty acid + NADH + 2 H(+). The catalysed reaction is (2E)-hexadecenal + NAD(+) + H2O = (E)-hexadec-2-enoate + NADH + 2 H(+). The enzyme catalyses hexadecanoate + NADH + 2 H(+) = hexadecanal + NAD(+) + H2O. It carries out the reaction 22-oxodocosanoate + NAD(+) + H2O = docosanedioate + NADH + 2 H(+). It catalyses the reaction 2,6,10,14-tetramethylpentadecanal + NAD(+) + H2O = 2,6,10,14-tetramethylpentadecanoate + NADH + 2 H(+). The catalysed reaction is octadecanal + NAD(+) + H2O = octadecanoate + NADH + 2 H(+). The enzyme catalyses dodecanoate + NADH + 2 H(+) = dodecanal + NAD(+) + H2O. It carries out the reaction decanal + NAD(+) + H2O = decanoate + NADH + 2 H(+). It catalyses the reaction tetradecanal + NAD(+) + H2O = tetradecanoate + NADH + 2 H(+). The catalysed reaction is octanal + NAD(+) + H2O = octanoate + NADH + 2 H(+). The enzyme catalyses heptanal + NAD(+) + H2O = heptanoate + NADH + 2 H(+). It carries out the reaction (2E,6E)-farnesal + NAD(+) + H2O = (2E,6E)-farnesoate + NADH + 2 H(+). Catalyzes the oxidation of medium and long-chain aliphatic aldehydes to fatty acids. Active on a variety of saturated and unsaturated aliphatic aldehydes between 6 and 24 carbons in length. Responsible for conversion of the sphingosine 1-phosphate (S1P) degradation product hexadecenal to hexadecenoic acid. This is Aldehyde dehydrogenase family 3 member A2 (ALDH3A2) from Macaca fascicularis (Crab-eating macaque).